Here is a 242-residue protein sequence, read N- to C-terminus: MIILPAIDLKEGKCIRLYQGDFKASKVVAEDPIEVALKFKENGAEYIHIVDLDGALTGEIKNLSIISSIIKTINIPVELGGGIRNLNTIDMLIGAGIERIILGTAALNNRGLVEEAVKKYDEKIAIGIDAKNEKVAINGWLNVSSINYIDFAKEMEKIGVRNIIFTDISKDGTLKGPNLKQLEKLNESISCNVIASGGIKDIEDLKVIKEMDVYGAIVGKAIYSGNINLNEAIKIINKGSSK.

Asp-8 serves as the catalytic Proton acceptor. Asp-129 acts as the Proton donor in catalysis.

The protein belongs to the HisA/HisF family.

It localises to the cytoplasm. The catalysed reaction is 1-(5-phospho-beta-D-ribosyl)-5-[(5-phospho-beta-D-ribosylamino)methylideneamino]imidazole-4-carboxamide = 5-[(5-phospho-1-deoxy-D-ribulos-1-ylimino)methylamino]-1-(5-phospho-beta-D-ribosyl)imidazole-4-carboxamide. The protein operates within amino-acid biosynthesis; L-histidine biosynthesis; L-histidine from 5-phospho-alpha-D-ribose 1-diphosphate: step 4/9. This chain is 1-(5-phosphoribosyl)-5-[(5-phosphoribosylamino)methylideneamino] imidazole-4-carboxamide isomerase, found in Clostridium botulinum (strain Kyoto / Type A2).